We begin with the raw amino-acid sequence, 261 residues long: Carbonic anhydrase 1 (261 aa).

A disordered region spans residues 1 to 31 (MASPDWGYDDKNGPEQWSKLYPIANGNNQSP). At alanine 2 the chain carries N-acetylalanine. Residues 4–261 (PDWGYDDKNG…LKGRTVRASF (258 aa)) form the Alpha-carbonic anhydrase domain. Histidine 65 (proton donor/acceptor) is an active-site residue. 5 residues coordinate Zn(2+): histidine 65, histidine 68, histidine 95, histidine 97, and histidine 120. Substrate is bound by residues threonine 200 and 200–201 (TH). Histidine 201 is a Zn(2+) binding site. The interval 241–261 (PMQHNNRPTQPLKGRTVRASF) is disordered.

Belongs to the alpha-carbonic anhydrase family. The cofactor is Zn(2+).

The protein resides in the cytoplasm. It carries out the reaction hydrogencarbonate + H(+) = CO2 + H2O. The enzyme catalyses urea = cyanamide + H2O. Activated by histamine, imidazole, L-adrenaline, L- and D-histidine, and L- and D-phenylalanine. Inhibited by coumarins, sulfonamide derivatives such as acetazolamide, benzenesulfonamide and derivatives (4-carboxyethylbenzene-sulfonamide, 4-carboxyethylbenzene-sulfonamide ethyl ester, 4-(acetyl-2-aminoethyl)benzene-sulfonamide, 4-aminoethylbenzene-sulfonamide), and 'prong inhibitors' BR15, BR17, BR22 and BR30. Activated by a short exposition to Foscarnet (phosphonoformate trisodium salt), but inhibited by a long one. Esterase activity weakly reduced by cyanamide. Catalyzes the reversible hydration of carbon dioxide. Can hydrate cyanamide to urea. This is Carbonic anhydrase 1 (CA1) from Homo sapiens (Human).